Reading from the N-terminus, the 52-residue chain is Large ribosomal subunit protein bL32c (52 aa).

It belongs to the bacterial ribosomal protein bL32 family.

The protein resides in the plastid. Its subcellular location is the chloroplast. The protein is Large ribosomal subunit protein bL32c of Aethionema grandiflorum (Persian stone-cress).